We begin with the raw amino-acid sequence, 328 residues long: Phenylalanine--tRNA ligase alpha subunit (328 aa).

It belongs to the class-II aminoacyl-tRNA synthetase family. Phe-tRNA synthetase alpha subunit type 1 subfamily. In terms of assembly, tetramer of two alpha and two beta subunits. Requires Mg(2+) as cofactor.

The protein resides in the cytoplasm. It catalyses the reaction tRNA(Phe) + L-phenylalanine + ATP = L-phenylalanyl-tRNA(Phe) + AMP + diphosphate + H(+). The protein is Phenylalanine--tRNA ligase alpha subunit of Buchnera aphidicola subsp. Baizongia pistaciae (strain Bp).